A 133-amino-acid chain; its full sequence is Small ribosomal subunit protein uS11 (133 aa).

The protein belongs to the universal ribosomal protein uS11 family. In terms of assembly, part of the 30S ribosomal subunit. Interacts with proteins S7 and S18. Binds to IF-3.

In terms of biological role, located on the platform of the 30S subunit, it bridges several disparate RNA helices of the 16S rRNA. Forms part of the Shine-Dalgarno cleft in the 70S ribosome. This Ralstonia nicotianae (strain ATCC BAA-1114 / GMI1000) (Ralstonia solanacearum) protein is Small ribosomal subunit protein uS11.